Here is a 655-residue protein sequence, read N- to C-terminus: Tumor necrosis factor receptor superfamily member 21 (655 aa).

The signal sequence occupies residues 1-41 (MGTRASSITALASCSRTAGQVGATMVAGSLLLLGFLSTITA). Over 42–349 (QPEQKTLSLP…AHKHFDINEH (308 aa)) the chain is Extracellular. TNFR-Cys repeat units lie at residues 50–88 (LPGT…LRVC), 90–131 (SCPA…DREC), 133–167 (CPPG…EDVR), and 170–211 (QCAR…DNVC). 9 cysteine pairs are disulfide-bonded: cysteine 67/cysteine 80, cysteine 70/cysteine 88, cysteine 91/cysteine 106, cysteine 109/cysteine 123, cysteine 113/cysteine 131, cysteine 133/cysteine 144, cysteine 150/cysteine 168, cysteine 171/cysteine 186, and cysteine 192/cysteine 211. The N-linked (GlcNAc...) asparagine glycan is linked to asparagine 82. Asparagine 141 is a glycosylation site (N-linked (GlcNAc...) asparagine). Disordered regions lie at residues 222–305 (PPSS…QAPH) and 318–339 (EATG…PRQN). Polar residues-rich tracts occupy residues 241–262 (VPSS…TASV) and 276–302 (PDNT…THQQ). Residues asparagine 252, asparagine 257, asparagine 278, and asparagine 289 are each glycosylated (N-linked (GlcNAc...) asparagine). Residues 330 to 339 (APKRGHPRQN) show a composition bias toward basic residues. A helical membrane pass occupies residues 350–370 (LPWMIVLFLLLVLVLIVVCSI). Cysteine 368 carries S-palmitoyl cysteine lipidation. At 371–655 (RKSSRTLKKG…SVYSHLPDLL (285 aa)) the chain is on the cytoplasmic side. In terms of domain architecture, Death spans 415 to 498 (GIDILKLVAA…DVVEKIRGLM (84 aa)).

As to quaternary structure, associates with TRADD. Interacts with NGFR. Interacts with CASP8. Oxidized in response to reactive oxygen species (ROS), leading to endocytosis. Detected in spleen B-cells (at protein level). Ubiquitous. Highly expressed in adult spleen, thymus, testis, prostate, ovary, small intestine, colon, brain, lung and kidney, and in fetal brain, liver and lung. Detected at lower levels in adult peripheral blood leukocytes, lung, and in fetal muscle, heart, kidney, small intestine and skin. Detected in T-cells, B-cells and monocytes. In T-cells expression is highest in Th0 cells, intermediate in Th2 cells and lower in Th1 cells. Expressed at low levels in proliferating progenitors in the spinal cord, but is highly expressed by differentiating neurons within the spinal cord and adjacent dorsal root ganglia.

Its subcellular location is the cell membrane. Promotes apoptosis, possibly via a pathway that involves the activation of NF-kappa-B. Can also promote apoptosis mediated by BAX and by the release of cytochrome c from the mitochondria into the cytoplasm. Trophic-factor deprivation triggers the cleavage of surface APP by beta-secretase to release sAPP-beta which is further cleaved to release an N-terminal fragment of APP (N-APP). Negatively regulates oligodendrocyte survival, maturation and myelination. Plays a role in signaling cascades triggered by stimulation of T-cell receptors, in the adaptive immune response and in the regulation of T-cell differentiation and proliferation. Negatively regulates T-cell responses and the release of cytokines such as IL4, IL5, IL10, IL13 and IFNG by Th2 cells. Negatively regulates the production of IgG, IgM and IgM in response to antigens. May inhibit the activation of JNK in response to T-cell stimulation. Also acts as a regulator of pyroptosis: recruits CASP8 in response to reactive oxygen species (ROS) and subsequent oxidation, leading to activation of GSDMC. The protein is Tumor necrosis factor receptor superfamily member 21 (Tnfrsf21) of Mus musculus (Mouse).